The chain runs to 86 residues: YcgL domain-containing protein XOO0428 (86 aa).

The YcgL domain occupies 1–83 (MHAYVYKSQR…PKTRVLAGEC (83 aa)).

This Xanthomonas oryzae pv. oryzae (strain MAFF 311018) protein is YcgL domain-containing protein XOO0428.